The primary structure comprises 348 residues: Pheromone P-factor receptor (348 aa).

A run of 7 helical transmembrane segments spans residues 46–69 (LLTG…VCLL), 79–103 (VFVF…TICS), 125–141 (VFNI…IFTA), 162–180 (IMTV…FWIT), 207–225 (YFIA…SGVF), 249–267 (CILV…FTII), and 283–301 (CLLI…STAL).

The protein belongs to the G-protein coupled receptor 4 family.

The protein resides in the membrane. Receptor for the peptide pheromone P-factor, a mating factor of S.pombe. Pheromone signaling is essential for initiation of meiosis in S.pombe; P-factor signaling alone may be sufficient. The sequence is that of Pheromone P-factor receptor (mam2) from Schizosaccharomyces pombe (strain 972 / ATCC 24843) (Fission yeast).